A 418-amino-acid chain; its full sequence is Glutamyl-tRNA reductase (418 aa).

Substrate-binding positions include 49–52 (TCNR), serine 109, 114–116 (EPQ), and glutamine 120. The active-site Nucleophile is cysteine 50. Residue 189 to 194 (GAGETI) coordinates NADP(+).

It belongs to the glutamyl-tRNA reductase family. In terms of assembly, homodimer.

The enzyme catalyses (S)-4-amino-5-oxopentanoate + tRNA(Glu) + NADP(+) = L-glutamyl-tRNA(Glu) + NADPH + H(+). Its pathway is porphyrin-containing compound metabolism; protoporphyrin-IX biosynthesis; 5-aminolevulinate from L-glutamyl-tRNA(Glu): step 1/2. Functionally, catalyzes the NADPH-dependent reduction of glutamyl-tRNA(Glu) to glutamate 1-semialdehyde (GSA). In Shigella flexneri, this protein is Glutamyl-tRNA reductase.